The primary structure comprises 179 residues: Inosine/xanthosine triphosphatase (179 aa).

8-13 serves as a coordination point for substrate; the sequence is TTNPAK. Asp-38 and Glu-68 together coordinate Mg(2+). Residue 68–69 participates in substrate binding; that stretch reads EA.

This sequence belongs to the YjjX NTPase family. In terms of assembly, homodimer. Requires Mg(2+) as cofactor. It depends on Mn(2+) as a cofactor.

It catalyses the reaction XTP + H2O = XDP + phosphate + H(+). The catalysed reaction is ITP + H2O = IDP + phosphate + H(+). Phosphatase that hydrolyzes non-canonical purine nucleotides such as XTP and ITP to their respective diphosphate derivatives. Probably excludes non-canonical purines from DNA/RNA precursor pool, thus preventing their incorporation into DNA/RNA and avoiding chromosomal lesions. This chain is Inosine/xanthosine triphosphatase, found in Proteus mirabilis (strain HI4320).